A 101-amino-acid chain; its full sequence is Small ribosomal subunit protein uS14 (101 aa).

The protein belongs to the universal ribosomal protein uS14 family. In terms of assembly, part of the 30S ribosomal subunit. Contacts proteins S3 and S10.

Binds 16S rRNA, required for the assembly of 30S particles and may also be responsible for determining the conformation of the 16S rRNA at the A site. The sequence is that of Small ribosomal subunit protein uS14 from Salmonella schwarzengrund (strain CVM19633).